The primary structure comprises 222 residues: Ras-related protein Rab-21 (222 aa).

Ala-2 carries the post-translational modification N-acetylalanine. Residues Gly-26, Gly-29, Lys-30, Thr-31, Ser-32, Asn-43, Asp-44, His-46, Thr-48, and Thr-49 each contribute to the GTP site. Thr-31 serves as a coordination point for Mg(2+). Residues 41–54 (KFNDKHITTLQASF) carry the Switch 1 motif. Mg(2+) is bound by residues Thr-49 and Asp-72. The Switch 2 motif lies at 74 to 92 (AGQERFHALGPIYYRDSNG). Residues Gly-75, Asn-130, Lys-131, Asp-133, Ala-161, and Lys-162 each contribute to the GTP site. 2 S-geranylgeranyl cysteine lipidation sites follow: Cys-218 and Cys-219. Cys-219 carries the post-translational modification Cysteine methyl ester. The propeptide at 220 to 222 (SSG) is removed in mature form.

The protein belongs to the small GTPase superfamily. Rab family. In terms of assembly, interacts with the cytoplasmic tail of integrins ITGA1, ITGA2, ITGA5, ITGA6, ITGA11 and ITGB1; this interaction is dependent upon its GDP/GTP cycle. Interacts with RABGEF1 (via VPS9 domain). Interacts with ANKRD27. Interacts with VAMP7. Interacts (in GTP-bound form) with VAMP8 in response to starvation; the interaction probably regulates VAMP8 endolysosomal trafficking. Interacts (active GTP-bound form) with TMED10; the interaction is indirect and regulates TMED10 abundance and localization at the Golgi. Mg(2+) is required as a cofactor.

It localises to the endoplasmic reticulum membrane. The protein resides in the golgi apparatus. The protein localises to the trans-Golgi network. Its subcellular location is the golgi apparatus membrane. It is found in the early endosome membrane. It localises to the cytoplasmic vesicle membrane. The protein resides in the cleavage furrow. The protein localises to the cell projection. Its subcellular location is the neuron projection. The enzyme catalyses GTP + H2O = GDP + phosphate + H(+). Regulated by guanine nucleotide exchange factors (GEFs) including ANKRD27 and RABGEF1, which promote the exchange of bound GDP for free GTP. Regulated by GTPase activating proteins (GAPs) which increase the GTP hydrolysis activity. Inhibited by GDP dissociation inhibitors (GDIs). Functionally, the small GTPases Rab are key regulators of intracellular membrane trafficking, from the formation of transport vesicles to their fusion with membranes. Rabs cycle between an inactive GDP-bound form and an active GTP-bound form that is able to recruit to membranes different sets of downstream effectors directly responsible for vesicle formation, movement, tethering and fusion. RAB21 is involved in membrane trafficking control. Regulates integrin internalization and recycling, but does not influence the traffic of endosomally translocated receptors in general. As a result, may regulate cell adhesion and migration. During the mitosis of adherent cells, controls the endosomal trafficking of integrins which is required for the successful completion of cytokinesis. Involved in neurite growth. Following SBF2/MTMT13-mediated activation in response to starvation-induced autophagy, binds to and regulates SNARE protein VAMP8 endolysosomal transport required for SNARE-mediated autophagosome-lysosome fusion. Modulates protein levels of the cargo receptors TMED2 and TMED10, and required for appropriate Golgi localization of TMED10. The sequence is that of Ras-related protein Rab-21 from Mus musculus (Mouse).